Here is a 748-residue protein sequence, read N- to C-terminus: Catalase-peroxidase (748 aa).

The segment at residues 92 to 238 (WHSAGTYRIG…LAAVQMGLIY (147 aa)) is a cross-link (tryptophyl-tyrosyl-methioninium (Trp-Tyr) (with M-264)). His-93 functions as the Proton acceptor in the catalytic mechanism. A cross-link (tryptophyl-tyrosyl-methioninium (Tyr-Met) (with W-92)) is located at residues 238-264 (YVNPEGPDGNPDPIASARDIRDTFARM). Heme b is bound at residue His-279.

Belongs to the peroxidase family. Peroxidase/catalase subfamily. In terms of assembly, homodimer or homotetramer. Heme b is required as a cofactor. In terms of processing, formation of the three residue Trp-Tyr-Met cross-link is important for the catalase, but not the peroxidase activity of the enzyme.

It carries out the reaction H2O2 + AH2 = A + 2 H2O. The catalysed reaction is 2 H2O2 = O2 + 2 H2O. Functionally, bifunctional enzyme with both catalase and broad-spectrum peroxidase activity. The sequence is that of Catalase-peroxidase from Xanthomonas euvesicatoria pv. vesicatoria (strain 85-10) (Xanthomonas campestris pv. vesicatoria).